The primary structure comprises 103 residues: Pyrimidine/purine nucleoside phosphorylase (103 aa).

The protein belongs to the nucleoside phosphorylase PpnP family.

The enzyme catalyses a purine D-ribonucleoside + phosphate = a purine nucleobase + alpha-D-ribose 1-phosphate. It carries out the reaction adenosine + phosphate = alpha-D-ribose 1-phosphate + adenine. The catalysed reaction is cytidine + phosphate = cytosine + alpha-D-ribose 1-phosphate. It catalyses the reaction guanosine + phosphate = alpha-D-ribose 1-phosphate + guanine. The enzyme catalyses inosine + phosphate = alpha-D-ribose 1-phosphate + hypoxanthine. It carries out the reaction thymidine + phosphate = 2-deoxy-alpha-D-ribose 1-phosphate + thymine. The catalysed reaction is uridine + phosphate = alpha-D-ribose 1-phosphate + uracil. It catalyses the reaction xanthosine + phosphate = alpha-D-ribose 1-phosphate + xanthine. Catalyzes the phosphorolysis of diverse nucleosides, yielding D-ribose 1-phosphate and the respective free bases. Can use uridine, adenosine, guanosine, cytidine, thymidine, inosine and xanthosine as substrates. Also catalyzes the reverse reactions. This chain is Pyrimidine/purine nucleoside phosphorylase, found in Shewanella oneidensis (strain ATCC 700550 / JCM 31522 / CIP 106686 / LMG 19005 / NCIMB 14063 / MR-1).